Reading from the N-terminus, the 498-residue chain is ATP synthase subunit beta, chloroplastic (498 aa).

Residue Thr6 is modified to Phosphothreonine. Ser13 is subject to Phosphoserine. An ATP-binding site is contributed by 172 to 179; sequence GGAGVGKT.

It belongs to the ATPase alpha/beta chains family. F-type ATPases have 2 components, CF(1) - the catalytic core - and CF(0) - the membrane proton channel. CF(1) has five subunits: alpha(3), beta(3), gamma(1), delta(1), epsilon(1). CF(0) has four main subunits: a(1), b(1), b'(1) and c(9-12).

Its subcellular location is the plastid. The protein localises to the chloroplast thylakoid membrane. The enzyme catalyses ATP + H2O + 4 H(+)(in) = ADP + phosphate + 5 H(+)(out). Functionally, produces ATP from ADP in the presence of a proton gradient across the membrane. The catalytic sites are hosted primarily by the beta subunits. The sequence is that of ATP synthase subunit beta, chloroplastic from Barbarea verna (Land cress).